The chain runs to 410 residues: Kynureninase (410 aa).

Pyridoxal 5'-phosphate contacts are provided by residues threonine 108, serine 109, 135 to 138 (FPTD), threonine 176, aspartate 205, histidine 208, and tyrosine 230. Lysine 231 carries the post-translational modification N6-(pyridoxal phosphate)lysine. Residues tryptophan 260 and threonine 286 each coordinate pyridoxal 5'-phosphate.

Belongs to the kynureninase family. As to quaternary structure, homodimer. The cofactor is pyridoxal 5'-phosphate.

The catalysed reaction is L-kynurenine + H2O = anthranilate + L-alanine + H(+). It carries out the reaction 3-hydroxy-L-kynurenine + H2O = 3-hydroxyanthranilate + L-alanine + H(+). Its pathway is amino-acid degradation; L-kynurenine degradation; L-alanine and anthranilate from L-kynurenine: step 1/1. It participates in cofactor biosynthesis; NAD(+) biosynthesis; quinolinate from L-kynurenine: step 2/3. In terms of biological role, catalyzes the cleavage of L-kynurenine (L-Kyn) and L-3-hydroxykynurenine (L-3OHKyn) into anthranilic acid (AA) and 3-hydroxyanthranilic acid (3-OHAA), respectively. The protein is Kynureninase of Deinococcus radiodurans (strain ATCC 13939 / DSM 20539 / JCM 16871 / CCUG 27074 / LMG 4051 / NBRC 15346 / NCIMB 9279 / VKM B-1422 / R1).